The following is a 467-amino-acid chain: Phosphomethylpyrimidine synthase (467 aa).

Residues Asn80, Met109, Tyr139, His175, 195 to 197 (SRG), 236 to 239 (DSLR), and Glu275 contribute to the substrate site. His279 provides a ligand contact to Zn(2+). Substrate is bound at residue Tyr302. His343 provides a ligand contact to Zn(2+). Residues Cys423, Cys426, and Cys431 each contribute to the [4Fe-4S] cluster site.

The protein belongs to the ThiC family. Requires [4Fe-4S] cluster as cofactor.

The catalysed reaction is 5-amino-1-(5-phospho-beta-D-ribosyl)imidazole + S-adenosyl-L-methionine = 4-amino-2-methyl-5-(phosphooxymethyl)pyrimidine + CO + 5'-deoxyadenosine + formate + L-methionine + 3 H(+). The protein operates within cofactor biosynthesis; thiamine diphosphate biosynthesis. Functionally, catalyzes the synthesis of the hydroxymethylpyrimidine phosphate (HMP-P) moiety of thiamine from aminoimidazole ribotide (AIR) in a radical S-adenosyl-L-methionine (SAM)-dependent reaction. This is Phosphomethylpyrimidine synthase from Synechococcus sp. (strain WH7803).